A 698-amino-acid chain; its full sequence is Voltage-dependent calcium channel beta subunit-associated regulatory protein (698 aa).

At 1–41 (MQPTATMATAAATTATVALTTSWDNATSRPTAEPDPILDNY) the chain is on the extracellular side. N25 carries N-linked (GlcNAc...) asparagine glycosylation. A helical; Signal-anchor for type III membrane protein membrane pass occupies residues 42 to 62 (VLLVVVMSLFVGGTLVVLSGV). Over 63–698 (LLLCKRCWEV…APTSPDHSPA (636 aa)) the chain is Cytoplasmic. Disordered regions lie at residues 90–124 (YLDN…TSST) and 185–275 (ASAA…SSGS). A compositionally biased stretch (low complexity) spans 185–197 (ASAAATPHPATTS). Phosphoserine occurs at positions 290 and 295. Disordered regions lie at residues 308–339 (SQRA…EQEG), 360–421 (PPPR…HAQC), 438–536 (ATAS…RRDY), and 554–648 (PHFD…GSGL). Residues 360-375 (PPPRPFLASPTSPPPT) are compositionally biased toward pro residues. A compositionally biased stretch (low complexity) spans 402-413 (PEHAQQQDPQQE). A compositionally biased stretch (gly residues) spans 459 to 468 (SGSGSGGGGA). Pro residues predominate over residues 471–482 (AFPPPPESPPAL). A compositionally biased stretch (basic and acidic residues) spans 483–493 (RPKDGEARRLL). Phosphoserine occurs at positions 501, 520, and 524. A compositionally biased stretch (basic residues) spans 562-576 (HRTRAHPHTHARKQW). S610 is subject to Phosphoserine. A Phosphothreonine modification is found at T691. Residues S692 and S696 each carry the phosphoserine modification.

Interacts with voltage-dependent calcium channels CACNB1, CACNB2, CACNB3 and CACNB4 beta subunits; prevents their interaction with the CACNA1C alpha subunit thereby negatively regulating the activity of the corresponding calcium channels. Expressed by neurons in the cortex, cerebellum and hippocampus and by pancreatic beta cells (at protein level).

The protein resides in the cytoplasmic vesicle. The protein localises to the secretory vesicle. It localises to the synaptic vesicle membrane. It is found in the cell membrane. Its subcellular location is the cell projection. The protein resides in the growth cone. Functionally, negatively regulates voltage-gated calcium channels by preventing the interaction between their alpha and beta subunits. Thereby, negatively regulates calcium channels activity at the plasma membrane and indirectly inhibits calcium-regulated exocytosis. The sequence is that of Voltage-dependent calcium channel beta subunit-associated regulatory protein from Mus musculus (Mouse).